Here is a 165-residue protein sequence, read N- to C-terminus: Minor capsid protein VP2 (165 aa).

It belongs to the sapovirus VP2 family. In terms of assembly, homooligomer. The portal-like structure consists in 12 copies of VP2. Interacts with capsid protein VP1.

It localises to the virion. It is found in the host cytoplasm. Its function is as follows. Minor structural protein that forms a portal-like structure at a unique three-fold axis of symmetry, following binding to the host receptor. The channel formed by VP2 may allow the delivery of the viral genome through the host endosomal membrane. The chain is Minor capsid protein VP2 from Homo sapiens (Human).